The sequence spans 742 residues: Potassium transporter 19 (742 aa).

Over 1–46 (MSVQEDGAARPEPDVLRRHDSLYGDAEKVSNNKRHGAGGSWARTLQ) the chain is Cytoplasmic. The helical transmembrane segment at 47-67 (LAFQSIGVVYGDVGTSPLYVY) threads the bilayer. Residues 68 to 83 (SSTFPNGIKHPDDLVG) lie on the Extracellular side of the membrane. A helical transmembrane segment spans residues 84–104 (VLSLILYTLILIPMVKYVFIV). Topologically, residues 105–170 (LYANDNGDGG…QKLESSNAAK (66 aa)) are cytoplasmic. A helical transmembrane segment spans residues 171-191 (IALFTITILGTSMVMGDGTLT). The Extracellular portion of the chain corresponds to 192–206 (PAISVLSAVSGIREK). The chain crosses the membrane as a helical span at residues 207-227 (APNLTQSQVVWISVAILFVLF). The Cytoplasmic segment spans residues 228–236 (SMQRFGTDK). The helical transmembrane segment at 237 to 257 (VGYTFAPVISVWFLLIAGIGM) threads the bilayer. Residues 258 to 287 (YNLTVHEITILRAFNPKYIVDYFRRNGKEA) lie on the Extracellular side of the membrane. N-linked (GlcNAc...) asparagine glycosylation is present at asparagine 259. Residues 288-308 (WVSLGGVVLCITGTEAMFADL) form a helical membrane-spanning segment. Residues 309–317 (GHFNIRAIQ) lie on the Cytoplasmic side of the membrane. A helical membrane pass occupies residues 318 to 338 (LSFTCVLFPSVALCYMGQAAY). Residues 339–352 (LRKFPENVGDTFYR) are Extracellular-facing. A helical membrane pass occupies residues 353 to 373 (SIPAPLFWPVFVVAIMGAIIA). Over 374–409 (SQAMLSGAFAILSKALSLGCFPRVEVVHTSNKYEGQ) the chain is Cytoplasmic. A helical membrane pass occupies residues 410–430 (VYIPEVNFLIGAASVAVTLAF). Residues 431–441 (QTTANIGNAYG) are Extracellular-facing. Residues 442–462 (ICVVTVFSITTHLMTVVMLLI) traverse the membrane as a helical segment. Residues 463–468 (WKVRLP) are Cytoplasmic-facing. Residues 469 to 489 (FIAAFYAAFGLAEFLYLSSIL) form a helical membrane-spanning segment. Residues 490–495 (SKFAEG) are Extracellular-facing. A helical transmembrane segment spans residues 496–516 (GYLPFCFSLVLMALMATWHYV). The Cytoplasmic portion of the chain corresponds to 517–742 (HVKRYWYELD…LLKVGITYEI (226 aa)).

It belongs to the HAK/KUP transporter (TC 2.A.72.3) family.

It is found in the membrane. High-affinity potassium transporter. This is Potassium transporter 19 (HAK19) from Oryza sativa subsp. japonica (Rice).